The primary structure comprises 291 residues: Lipase (291 aa).

The N-terminal stretch at 1 to 17 (MRSSLVLFFVSAWTALA) is a signal peptide. Positions 18–22 (SPIRR) are excised as a propeptide. 3 disulfides stabilise this stretch: Cys-44–Cys-290, Cys-58–Cys-63, and Cys-126–Cys-129. Ser-168 functions as the Nucleophile in the catalytic mechanism. Catalysis depends on charge relay system residues Asp-223 and His-280.

Belongs to the AB hydrolase superfamily. Lipase family.

The catalysed reaction is a triacylglycerol + H2O = a diacylglycerol + a fatty acid + H(+). This Thermomyces lanuginosus (Humicola lanuginosa) protein is Lipase (LIP).